The chain runs to 254 residues: Ciliary microtubule associated protein 1A (254 aa).

2 STPGR repeats span residues 180–205 (PGPA…MAAR) and 216–241 (PGPG…FGIK). Residues 207–228 (EPPGDKTLKPGPGAHSPEKVTL) are disordered.

The protein belongs to the CIMAP family. As to quaternary structure, microtubule inner protein component of sperm flagellar doublet microtubules. In terms of tissue distribution, testis-specific (at protein level). Expression restricted to the germ cell fraction, absent in somatic cell fractions such as Sertoli and Leydig cells. Expression detected in the third week postpartum (23 days) after haploid germ cells developed, expression increased with age. Expressed in the tails of elongated spermatids sticking out toward the tubular lumen, and in cytoplasmic droplets still attached to the spermatid tail membrane. Expressed in the tails of mature sperm, from the connecting piece proximal to the head, along the middle and principal pieces, down to the distal end piece.

It localises to the cytoplasm. The protein resides in the cytoskeleton. The protein localises to the flagellum axoneme. In terms of biological role, outer dense fibers are filamentous structures located on the outside of the axoneme in the midpiece and principal piece of the mammalian sperm tail. May help to maintain the passive elastic structures and elastic recoil of the sperm tail. The protein is Ciliary microtubule associated protein 1A (Cimap1a) of Mus musculus (Mouse).